Reading from the N-terminus, the 79-residue chain is Acyl carrier protein (79 aa).

One can recognise a Carrier domain in the interval 2–77 (SDIEARVKKI…LAIDYAKNNV (76 aa)). Ser37 carries the O-(pantetheine 4'-phosphoryl)serine modification.

The protein belongs to the acyl carrier protein (ACP) family. 4'-phosphopantetheine is transferred from CoA to a specific serine of apo-ACP by AcpS. This modification is essential for activity because fatty acids are bound in thioester linkage to the sulfhydryl of the prosthetic group.

It is found in the cytoplasm. Its pathway is lipid metabolism; fatty acid biosynthesis. Functionally, carrier of the growing fatty acid chain in fatty acid biosynthesis. The polypeptide is Acyl carrier protein (Leptothrix cholodnii (strain ATCC 51168 / LMG 8142 / SP-6) (Leptothrix discophora (strain SP-6))).